The following is a 531-amino-acid chain: Berberine bridge enzyme-like 9 (531 aa).

A signal peptide spans 1–23 (MTSLTTQTLIITIFLLTIPTSFA). A disulfide bridge connects residues cysteine 35 and cysteine 99. Asparagine 76, asparagine 164, asparagine 271, asparagine 300, asparagine 314, asparagine 400, and asparagine 485 each carry an N-linked (GlcNAc...) asparagine glycan. The region spanning 77-252 (MTRKPVAIVA…LAWKIKLVPV (176 aa)) is the FAD-binding PCMH-type domain. Positions 114-177 (HDYDGMSYLS…DLRGFPAGIC (64 aa)) form a cross-link, 6-(S-cysteinyl)-8alpha-(pros-histidyl)-FAD (His-Cys).

It belongs to the oxygen-dependent FAD-linked oxidoreductase family. Requires FAD as cofactor. Post-translationally, the FAD cofactor is bound via a bicovalent 6-S-cysteinyl, 8alpha-N1-histidyl FAD linkage. Accumulates in cell walls of etiolated hypocotyls.

Its subcellular location is the secreted. It is found in the cell wall. The sequence is that of Berberine bridge enzyme-like 9 from Arabidopsis thaliana (Mouse-ear cress).